A 412-amino-acid chain; its full sequence is MKAEIMAIGTEILLGDIVNTNAQFLAKELANLGIGVYHQSVVGDNSERILEAFDNAFKNCDTIITTGGLGPTKDDLSKELAAKYFNMEMCLREELLCDLEDYFKKNNLEMTENNKKQCYFPKEAIILPNPNGTAPGAILEGENNKRIILLPGPPREMEPMFTNHVVPYLSKFTDSVLVSKILRVFGIGESKMEDLVCDLLDNENPTVAPYAKNIDVILRITAKGKDKEEAEKLIAPMEKEIRKRLGDNIYGEGEVTLEEVVGKLLVDKKMTVSTAESCTGGMVASTLINYPGISEVFMEGAVTYSNEAKMKRLGVKKETLEDFGAVSEECAREMAKGIAKNAGTRIGISTTGIAGPGGGTEEKPVGLVYAGLCIDGITKVKKFNFKADRQKVRTRTMMNVLDWLRRELEKID.

It belongs to the CinA family.

The protein is Putative competence-damage inducible protein of Clostridium perfringens (strain 13 / Type A).